A 570-amino-acid chain; its full sequence is MIPPEIRRSVLLQKAIKLALAGTLLTFASFSATAADPSSDTETPQPPDILLGPLFNDVQNAKLFPDQKTFADAIPNSDPLMILADYRMQRNQSGFDLRHFVDVNFTLPKAGEKYVPPAGQSLREHIDGLWPVLTRSTKNVEKWDSLLPLPESYVVPGGRFREIYYWDSYFTMLGLAESGHWDKVADMVANFGYEIDAWGYIPNGNRTYYLSRSQPPFFAFMVELLVQHEGDDALKEYLPQLQKEYAYWMEGVETLQPGQQNQRVVKLEDGSVLNRYWDDRDTPRPESWVEDIATAKSNPSRPATEIYRDLRSAAASGWDFSSRWMDNPQQLSTIRTTTIVPVDLNALLYQLEKTLARASAAAGDRAKASQYDALANARQKAIEMHLWNNKEGWYADYDLQNNKIRDQLTAAALFPLYVNAAAKDRAAKVAAAAQAHLLQPGGLATTSVKSGQQWDAPNGWAPLQWVAAEGLQNYGQDDVAMEVTWRFLTNVQHTYDREKKLVEKYDVSSTGTGGGGGEYPLQDGFGWSNGVTLKMLDLICPQEKPCDSVPSTRPASLSATPTKTPSAATQ.

The N-terminal stretch at 1–34 (MIPPEIRRSVLLQKAIKLALAGTLLTFASFSATA) is a signal peptide. Substrate-binding positions include Arg159, 166-167 (WD), Asn203, 212-214 (RSQ), 284-286 (RPE), and Gly317. Catalysis depends on proton donor/acceptor residues Asp319 and Glu503. Glu518 contacts substrate. The segment at 544-570 (KPCDSVPSTRPASLSATPTKTPSAATQ) is disordered. Residues 554–570 (PASLSATPTKTPSAATQ) are compositionally biased toward low complexity.

This sequence belongs to the glycosyl hydrolase 37 family. In terms of assembly, monomer.

The protein localises to the periplasm. The enzyme catalyses alpha,alpha-trehalose + H2O = alpha-D-glucose + beta-D-glucose. Its function is as follows. Provides the cells with the ability to utilize trehalose at high osmolarity by splitting it into glucose molecules that can subsequently be taken up by the phosphotransferase-mediated uptake system. This is Putative periplasmic trehalase from Salmonella typhi.